Reading from the N-terminus, the 254-residue chain is Probable phosphatase Sbal223_2880 (254 aa).

Positions 8, 10, 16, 41, 74, 102, 132, 193, and 195 each coordinate Zn(2+).

It belongs to the PHP family. It depends on Zn(2+) as a cofactor.

This Shewanella baltica (strain OS223) protein is Probable phosphatase Sbal223_2880.